Reading from the N-terminus, the 566-residue chain is Urease subunit alpha (566 aa).

The region spanning Gly-128–Phe-566 is the Urease domain. Ni(2+)-binding residues include His-133, His-135, and Lys-216. Position 216 is an N6-carboxylysine (Lys-216). His-218 is a substrate binding site. His-245 and His-271 together coordinate Ni(2+). The active-site Proton donor is the His-319. Asp-359 contributes to the Ni(2+) binding site.

The protein belongs to the metallo-dependent hydrolases superfamily. Urease alpha subunit family. As to quaternary structure, heterotrimer of UreA (gamma), UreB (beta) and UreC (alpha) subunits. Three heterotrimers associate to form the active enzyme. It depends on Ni cation as a cofactor. Post-translationally, carboxylation allows a single lysine to coordinate two nickel ions.

It is found in the cytoplasm. The enzyme catalyses urea + 2 H2O + H(+) = hydrogencarbonate + 2 NH4(+). The protein operates within nitrogen metabolism; urea degradation; CO(2) and NH(3) from urea (urease route): step 1/1. This Nitrosococcus oceani (strain ATCC 19707 / BCRC 17464 / JCM 30415 / NCIMB 11848 / C-107) protein is Urease subunit alpha.